The following is a 107-amino-acid chain: 2Fe-2S ferredoxin CtmE (107 aa).

In terms of domain architecture, 2Fe-2S ferredoxin-type spans 3-106 (VKVTYVDSAN…GLVIHTLEPE (104 aa)). Residues Cys41, Cys47, Cys50, and Cys87 each contribute to the [2Fe-2S] cluster site.

This sequence belongs to the adrenodoxin/putidaredoxin family. [2Fe-2S] cluster serves as cofactor.

Its pathway is terpene metabolism; monoterpene degradation. Its function is as follows. Involved in the degradation of the cyclic monoterpene limonene. Probably part of an electron transfer system involved in the oxidation of limonene to perillyl alcohol. This chain is 2Fe-2S ferredoxin CtmE, found in Castellaniella defragrans (strain DSM 12143 / CCUG 39792 / 65Phen) (Alcaligenes defragrans).